The sequence spans 754 residues: Circadian input-output histidine kinase CikA (754 aa).

An N-terminal domain, not required to complement the deletion strain region spans residues 1–183 (MLAPSSNCSL…QVSAQIRLSL (183 aa)). The segment at 184 to 338 (DLSEILTTTI…RDILQHLAEH (155 aa)) is GAF domain, required to complement the deletion strain. A Histidine kinase domain is found at 390–611 (TMSHELRTPL…TFTVWIPEQT (222 aa)). A Phosphohistidine; by autocatalysis modification is found at histidine 393. Positions 606 to 754 (WIPEQTLIEP…NLSEGDRPSS (149 aa)) are psR domain, required to complement the deletion strain and for cell pole localization, attenuates autophosphorylation activity. Binds KaiB(fs). The region spanning 629-742 (HILLLEEEDE…LLLTTLQGLC (114 aa)) is the Response regulatory domain.

This sequence in the N-terminal section; belongs to the phytochrome family. In terms of assembly, homodimer. Part of the circadian clock (KaiA, KaiB, KaiC, CikA, RpaA, SasA), the composition of which varies during the circadian cycle. Interacts with LdpA. KaiA and CikA compete for binding to KaiB(fs).

It localises to the cytoplasm. It is found in the membrane. It catalyses the reaction ATP + protein L-histidine = ADP + protein N-phospho-L-histidine.. Functions in an input pathway to the Kai circadian clock. Senses oxidized quinones via its C-terminal pseudo-receiver domain, providing a link between cell metabolism and the clock. Affects the ratio of phosphorylated to unphosphorylated KaiC, binds quinones via its pseudo-receptor domain. Quinone-binding destabilizes the protein rapidly. Autophosphorylates, does not transfer the phosphate to its pseudo-receiver (PsR) domain. May play a role in cell division, as suggested by its polar location and increased cell length in a deletion strain. In terms of biological role, member of the two-component regulatory system CikA/RpaA output pathway from the circadian clock, negatively regulating kaiBC expression independently of labA and of sasA. One of three clock output pathways. Dephosphorylates phospho-RpaA, enhanced by KaiB and KaiC, has only modest kinase activity on RpaA. A very robust clock is reconstituted with KaiA, KaiB, KaiC, SasA, CikA and RpaA; output is measured by transcription from an appropriate reporter. The polypeptide is Circadian input-output histidine kinase CikA (Synechococcus elongatus (strain ATCC 33912 / PCC 7942 / FACHB-805) (Anacystis nidulans R2)).